Consider the following 375-residue polypeptide: MLLPPHPGRTLPAYHGDNRFLLGACFLSKLPMLRPMKLSLVCSANPNNHRSRSSDITRHQKGGSARRKSKPYQEKDDSENIDEFDTDIMSSKNGPPISLTSNSRPQATSVPGEREKEIVELFKRVQAQLRARGKGKEEKKPEQAKAQGERGSVDSLLNLLRKHSVDQRRKSGDEKEQSVDQTKRSNESGNKQNSSIFIKNDTQEEQKKPHPAAFKRPASNFRRRSPVPNVKFQPVTNVDAERVINNINDAVQEAKPTLENKAATDEPDSVSTFEPNSVIEPENLSLDDLDHISDDEPDASDTDEPSGEYDEPSLQIPSVPIIDESHDTTLKSSLGGPDLSTLKVTELRELAKSRGIKGYSKMKKNDLVELLSNMA.

Disordered regions lie at residues Pro-46–Glu-113, Arg-130–Gln-233, and Thr-257–Gln-315. Residues His-59–Lys-70 are compositionally biased toward basic residues. Over residues Asp-76–Thr-86 the composition is skewed to acidic residues. The segment covering Ile-88 to Ser-109 has biased composition (polar residues). 2 stretches are compositionally biased toward basic and acidic residues: residues Lys-134 to Ser-152 and His-163 to Asn-186. Polar residues predominate over residues Glu-187–Phe-197. Over residues Asp-295–Glu-311 the composition is skewed to acidic residues. The interaction with WAXY stretch occupies residues Asp-338 to Ala-375.

As to quaternary structure, binds to the DNA in the promoter region of WAXY containing the sequence 5'-ACGCACGCTAACGTGA-3'. As to expression, expressed in tissues with high cell division activities: in root tips, stem node, panicle, flower and immature seed. Weakly expressed in root and leaf.

Functionally, may regulate cell proliferation and plant growth. In Oryza sativa subsp. japonica (Rice), this protein is SAP-like protein BP-73 (BP-73).